The following is a 223-amino-acid chain: Thiopurine S-methyltransferase (223 aa).

The S-adenosyl-L-methionine site is built by Trp10, Leu45, Glu66, and Arg127.

The protein belongs to the class I-like SAM-binding methyltransferase superfamily. TPMT family.

The protein resides in the cytoplasm. The catalysed reaction is S-adenosyl-L-methionine + a thiopurine = S-adenosyl-L-homocysteine + a thiopurine S-methylether.. This Shewanella woodyi (strain ATCC 51908 / MS32) protein is Thiopurine S-methyltransferase.